Reading from the N-terminus, the 283-residue chain is Short-chain dehydrogenase cctT (283 aa).

An N-terminal signal peptide occupies residues 1-20; the sequence is MLKTVLITGCSHGGLGAAMA. Residues Ile7, Thr33, Lys39, Glu55, and Asn83 each contribute to the NADP(+) site. Residue Asn131 is glycosylated (N-linked (GlcNAc...) asparagine). Ser133 serves as the catalytic Proton donor. Residues Tyr147, Arg151, Val180, and Thr182 each contribute to the NADP(+) site. Tyr147 functions as the Proton acceptor in the catalytic mechanism.

It belongs to the short-chain dehydrogenases/reductases (SDR) family.

Its function is as follows. Short-chain dehydrogenase; part of the gene cluster that mediates the biosynthesis of the mycotoxin cyclochlorotine, a hepatotoxic and carcinogenic cyclic chlorinated pentapeptide. The function of cctT within the pathway, if any, remains undetermined. The NRPS cctN initially catalyzes the condensation of L-serine (Ser), Pro, L-2-aminobutyrate (2Abu), Ser, and beta-Phe in this order to produce isocyclotine. After the dichlorination of Pro2 catalyzed by cctP2 to produce isocyclochlorotine, the cctO-mediated transacylation of isocyclochlorotine can furnish cyclochlorotine. The subsequent hydroxylation of cyclochlorotine by cctR yields hydroxycyclochlorotine as the final product. CctP1 probably acts as a phenylalanine aminomutase and provides the uncommon building block beta-Phe. Furthermore, 2Abu can be synthesized from threonine by one of the threonine dehydratases and transaminases localized outside of the cluster. The functions of the remaining proteins encoded by the cluster, cctM and cctT, have not been identified yet. The polypeptide is Short-chain dehydrogenase cctT (Talaromyces islandicus (Penicillium islandicum)).